Here is a 262-residue protein sequence, read N- to C-terminus: Short-chain reductase protein NovJ (262 aa).

Residues 23–26 (GAGR) and 73–74 (DV) each bind NADP(+). Ser-152 contacts substrate. Catalysis depends on Tyr-164, which acts as the Proton acceptor. 164–168 (YATAK) provides a ligand contact to NADP(+).

The protein belongs to the short-chain dehydrogenases/reductases (SDR) family. As to quaternary structure, heterotetramer; the NovJ(2)K(2) heterotetramer is composed of subunits of 2 NovJ and 2 subunits of NovK.

Its pathway is antibiotic biosynthesis; novobiocin biosynthesis. Its function is as follows. Catalytic subunit of the NovJ(2)K(2) heterotetramer that catalyzes the NADPH-dependent reduction of the tyrosyl moiety of L-beta-OH-Tyr-S-NovH intermediate to yield the tethered beta-ketotyrosyl-S-NovH in the novobiocin biosynthesis pathway. Novobiocin is an aminocoumarin family antibiotic that targets bacterial DNA gyrases. This chain is Short-chain reductase protein NovJ (novJ), found in Streptomyces niveus (Streptomyces spheroides).